The primary structure comprises 267 residues: Enolase-phosphatase E1 (267 aa).

Positions 11 and 13 each coordinate Mg(2+). Residues 155–156 (SS) and K189 each bind substrate. D215 serves as a coordination point for Mg(2+).

The protein belongs to the HAD-like hydrolase superfamily. MasA/MtnC family. In terms of assembly, monomer. It depends on Mg(2+) as a cofactor.

Its subcellular location is the cytoplasm. It is found in the nucleus. The catalysed reaction is 5-methylsulfanyl-2,3-dioxopentyl phosphate + H2O = 1,2-dihydroxy-5-(methylsulfanyl)pent-1-en-3-one + phosphate. Its pathway is amino-acid biosynthesis; L-methionine biosynthesis via salvage pathway; L-methionine from S-methyl-5-thio-alpha-D-ribose 1-phosphate: step 3/6. It functions in the pathway amino-acid biosynthesis; L-methionine biosynthesis via salvage pathway; L-methionine from S-methyl-5-thio-alpha-D-ribose 1-phosphate: step 4/6. Functionally, bifunctional enzyme that catalyzes the enolization of 2,3-diketo-5-methylthiopentyl-1-phosphate (DK-MTP-1-P) into the intermediate 2-hydroxy-3-keto-5-methylthiopentenyl-1-phosphate (HK-MTPenyl-1-P), which is then dephosphorylated to form the acireductone 1,2-dihydroxy-3-keto-5-methylthiopentene (DHK-MTPene). The protein is Enolase-phosphatase E1 (enoph1) of Dictyostelium discoideum (Social amoeba).